The chain runs to 200 residues: MKHIYEKGTSDNVLLLLHGTGGNEHDLLSLGRFIDPDAHLLGVRGSVLENGMPRFFKRLSEGVFDEKDLVVRTRELKDFIDEAAETHQFNRGRVIAVGYSNGANIAASLLFHYKDVLKGAILHHPMVPIRGIELPDMAGLPVFIGAGKYDPLCTKEESEELYRYLRDSGASASVYWQDGGHQLTQHEAEQAREWYKEAIV.

Catalysis depends on charge relay system residues S100, D150, and H181.

The protein belongs to the AB hydrolase superfamily. AB hydrolase 2 family.

It localises to the cytoplasm. Its function is as follows. Putative hydrolase that may contribute to the degradation of aromatic compounds. The sequence is that of Putative hydrolase MhqD (mhqD) from Bacillus subtilis (strain 168).